A 203-amino-acid polypeptide reads, in one-letter code: Potassium channel Cha6605_3372 (203 aa).

The Cytoplasmic portion of the chain corresponds to 1 to 7; that stretch reads MVEAPEQ. Residues 8–31 traverse the membrane as a helical segment; it reads SETGRIEAFSDGVFAIAITLLVLE. The RxxxFSD motif signature appears at 12-18; sequence RIEAFSD. The Extracellular portion of the chain corresponds to 32–52; the sequence is IKVPQHKIVETVGLVSSLLSL. Positions 37-42 are short helix H1; it reads HKIVET. A short helix H2 region spans residues 44–50; sequence GLVSSLL. Residues 53-78 form a helical membrane-spanning segment; it reads WPSYLAFLTSFASILVMWVNHHRIFS. Residues 79 to 84 lie on the Cytoplasmic side of the membrane; it reads LVARTD. Residues 85 to 110 form a helical membrane-spanning segment; the sequence is HAFFYWNGLLLMLVTFVPFPTALLAE. Residues 111 to 117 are Extracellular-facing; that stretch reads YLIHPQA. The chain crosses the membrane as a helical span at residues 118–142; that stretch reads RVAASVYAGIFLAIAIVFNRLWKHA. Topologically, residues 143 to 154 are cytoplasmic; it reads ATADRLLAQKAD. The helical transmembrane segment at 155-181 threads the bilayer; the sequence is RHEVDAITKQYRFGPGLYLVAFALSFI. The Extracellular segment spans residues 182–183; it reads SV. A helical transmembrane segment spans residues 184 to 199; that stretch reads WLSVGVCFVLAIYFAL. Topologically, residues 200–203 are cytoplasmic; that stretch reads RSNA.

Belongs to the TMEM175 family. In terms of assembly, homotetramer.

The protein resides in the membrane. The catalysed reaction is K(+)(in) = K(+)(out). In terms of biological role, potassium channel. The channel is permeable for K(+), Rb(+) and Cs(+), while it is unable to conduct Na(+). The polypeptide is Potassium channel Cha6605_3372 (Chamaesiphon minutus (strain ATCC 27169 / PCC 6605)).